The chain runs to 289 residues: 4-hydroxybenzoate octaprenyltransferase (289 aa).

The next 9 helical transmembrane spans lie at 22-42 (AGWL…SHGF), 45-65 (WHLV…GCCI), 96-116 (LGLG…TNAV), 118-138 (IAWS…KRYV), 140-160 (MPQA…FAAV), 164-184 (VPPL…AYDT), 211-231 (VAGV…ALIQ), 236-256 (AIFM…GWLI), and 267-287 (AFRL…LSYW).

This sequence belongs to the UbiA prenyltransferase family. Requires Mg(2+) as cofactor.

The protein localises to the cell inner membrane. The catalysed reaction is all-trans-octaprenyl diphosphate + 4-hydroxybenzoate = 4-hydroxy-3-(all-trans-octaprenyl)benzoate + diphosphate. It participates in cofactor biosynthesis; ubiquinone biosynthesis. In terms of biological role, catalyzes the prenylation of para-hydroxybenzoate (PHB) with an all-trans polyprenyl group. Mediates the second step in the final reaction sequence of ubiquinone-8 (UQ-8) biosynthesis, which is the condensation of the polyisoprenoid side chain with PHB, generating the first membrane-bound Q intermediate 3-octaprenyl-4-hydroxybenzoate. The sequence is that of 4-hydroxybenzoate octaprenyltransferase from Polaromonas naphthalenivorans (strain CJ2).